The sequence spans 470 residues: uncharacterized protein (470 aa).

An HTH gntR-type domain is found at Met1 to Arg69. Lys313 carries the post-translational modification N6-(pyridoxal phosphate)lysine.

It in the C-terminal section; belongs to the class-I pyridoxal-phosphate-dependent aminotransferase family.

This is an uncharacterized protein from Escherichia coli (strain K12).